The sequence spans 62 residues: Guanine nucleotide-binding protein subunit gamma (62 aa).

Cysteine methyl ester is present on Cys-59. The S-geranylgeranyl cysteine moiety is linked to residue Cys-59. The propeptide at 60-62 (SVL) is removed in mature form.

Belongs to the G protein gamma family. In terms of assembly, g proteins are composed of 3 units, alpha, beta and gamma. Interacts with gpb-1 and gpb-2.

It is found in the cell membrane. In terms of biological role, guanine nucleotide-binding proteins (G proteins) are involved as a modulator or transducer in various transmembrane signaling systems. The beta and gamma chains are required for the GTPase activity, for replacement of GDP by GTP, and for G protein-effector interaction. The protein is Guanine nucleotide-binding protein subunit gamma (gpc-1) of Caenorhabditis briggsae.